A 160-amino-acid chain; its full sequence is Transcription elongation factor GreA (160 aa).

A coiled-coil region spans residues 4 to 70; it reads QKQYPMTQEG…IEQDIQRIEH (67 aa).

The protein belongs to the GreA/GreB family.

Functionally, necessary for efficient RNA polymerase transcription elongation past template-encoded arresting sites. The arresting sites in DNA have the property of trapping a certain fraction of elongating RNA polymerases that pass through, resulting in locked ternary complexes. Cleavage of the nascent transcript by cleavage factors such as GreA or GreB allows the resumption of elongation from the new 3'terminus. GreA releases sequences of 2 to 3 nucleotides. The polypeptide is Transcription elongation factor GreA (Staphylococcus carnosus (strain TM300)).